Reading from the N-terminus, the 1336-residue chain is Coiled-coil and C2 domain-containing protein 2A (1336 aa).

Disordered regions lie at residues 1-29 (MEAA…EQEV) and 70-97 (VEDC…QTFI). The span at 8 to 23 (KTAKKKRKTHTTRGYR) shows a compositional bias: basic residues. The segment covering 70–89 (VEDCQESDEDSGGELAEEPT) has biased composition (acidic residues). Residues 136–156 (LSDLSELKDSQIRMLNRYQEQ) are a coiled coil. One can recognise a C2 domain in the interval 755-915 (PREPSGWSGH…LASRTFEGCI (161 aa)).

In terms of assembly, probable component of the tectonic-like complex (also named MKS complex), composed of B9d1, B9d2, Cc2d2a, Mks1 and tctn. Expressed in the antennae of chordotonal neurons and male germ cells (at protein level).

It is found in the cytoplasm. The protein localises to the cytoskeleton. Its subcellular location is the cilium basal body. It localises to the microtubule organizing center. The protein resides in the centrosome. It is found in the centriole. Functionally, probable component of the tectonic-like complex (also named MKS complex), a complex localized at the transition zone of primary cilia. Required for ciliary structure and function. In Drosophila melanogaster (Fruit fly), this protein is Coiled-coil and C2 domain-containing protein 2A.